Consider the following 352-residue polypeptide: Anthranilate phosphoribosyltransferase (352 aa).

Residues G94, 97 to 98 (GS), S102, 104 to 107 (NIST), 122 to 130 (KHGNRAVSS), and S134 contribute to the 5-phospho-alpha-D-ribose 1-diphosphate site. Residue G94 coordinates anthranilate. S106 serves as a coordination point for Mg(2+). N125 provides a ligand contact to anthranilate. R180 provides a ligand contact to anthranilate. Mg(2+)-binding residues include D239 and E240.

Belongs to the anthranilate phosphoribosyltransferase family. In terms of assembly, homodimer. It depends on Mg(2+) as a cofactor.

The catalysed reaction is N-(5-phospho-beta-D-ribosyl)anthranilate + diphosphate = 5-phospho-alpha-D-ribose 1-diphosphate + anthranilate. It functions in the pathway amino-acid biosynthesis; L-tryptophan biosynthesis; L-tryptophan from chorismate: step 2/5. In terms of biological role, catalyzes the transfer of the phosphoribosyl group of 5-phosphorylribose-1-pyrophosphate (PRPP) to anthranilate to yield N-(5'-phosphoribosyl)-anthranilate (PRA). In Geobacter sp. (strain M21), this protein is Anthranilate phosphoribosyltransferase.